Here is a 447-residue protein sequence, read N- to C-terminus: N-succinylarginine dihydrolase (447 aa).

Residues 19-28, N110, and 137-138 each bind substrate; these read AGLSFGNEAS and HR. Residue E174 is part of the active site. Residue R212 participates in substrate binding. H248 is a catalytic residue. D250 and N359 together coordinate substrate. C365 serves as the catalytic Nucleophile.

The protein belongs to the succinylarginine dihydrolase family. Homodimer.

It carries out the reaction N(2)-succinyl-L-arginine + 2 H2O + 2 H(+) = N(2)-succinyl-L-ornithine + 2 NH4(+) + CO2. It functions in the pathway amino-acid degradation; L-arginine degradation via AST pathway; L-glutamate and succinate from L-arginine: step 2/5. In terms of biological role, catalyzes the hydrolysis of N(2)-succinylarginine into N(2)-succinylornithine, ammonia and CO(2). The polypeptide is N-succinylarginine dihydrolase (Escherichia coli O81 (strain ED1a)).